The following is a 495-amino-acid chain: Inner membrane ALBINO3-like protein 1, chloroplastic (495 aa).

A helical transmembrane segment spans residues 76–96; it reads LGAIYVLADASASTAAAAVMP. The Stromal portion of the chain corresponds to 97–206; that stretch reads TAVDSAAGAA…VLYEQAGVNP (110 aa). A helical transmembrane segment spans residues 207-227; it reads LAGCLPTLATIPIFIGLFSSL. At 228–273 the chain is on the lumenal side; the sequence is TNVANDGLLDTQGFYFVPSLAGPTTMAMRQSGLGTSWLWPLGPDGA. Residues 274 to 294 form a helical membrane-spanning segment; sequence PPIGWEDAAAYLTLPLLLVAV. The Stromal portion of the chain corresponds to 295–317; it reads QYASSSVTSPPIDPKDENANTQR. The helical transmembrane segment at 318–338 threads the bilayer; the sequence is ALLVFLPLMVGWFSLNVPAGL. Topologically, residues 339–441 are lumenal; that stretch reads SLYYLANTVL…ASVSLSVDDS (103 aa). Residues 442–462 traverse the membrane as a helical segment; the sequence is TAAIAGTATMAVTAGAPAAAM. At 463 to 495 the chain is on the stromal side; sequence DPSKVNRRCKRRRLTSLVQDGSTASAAVAGASA.

The protein belongs to the OXA1/ALB3/YidC (TC 2.A.9.2) family. In terms of assembly, associates with the LHCII complex and with the psaE subunit of the LHCI complex.

The protein localises to the plastid. Its subcellular location is the chloroplast thylakoid membrane. In terms of biological role, required for the insertion of some light-harvesting complexes (LHC) proteins into the chloroplast thylakoid membrane. Essential for the assembly and activity of LHC I and II. Its function is probably partly distinct from that of ALB3.2. The polypeptide is Inner membrane ALBINO3-like protein 1, chloroplastic (ALB3.1) (Chlamydomonas reinhardtii (Chlamydomonas smithii)).